A 595-amino-acid chain; its full sequence is Beta-lactamase-like protein ARB_00930 (595 aa).

The first 18 residues, 1–18 (MVVCFLWLLLPYAATTLS), serve as a signal peptide directing secretion. Residues N70 and N102 are each glycosylated (N-linked (GlcNAc...) asparagine). S117 serves as the catalytic Acyl-ester intermediate. N-linked (GlcNAc...) asparagine glycosylation is found at N147, N156, and N195. Y235 acts as the Proton acceptor in catalysis. Residues N249, N461, and N473 are each glycosylated (N-linked (GlcNAc...) asparagine).

The protein belongs to the beta-lactamase family.

It is found in the secreted. The catalysed reaction is a beta-lactam + H2O = a substituted beta-amino acid. In Arthroderma benhamiae (strain ATCC MYA-4681 / CBS 112371) (Trichophyton mentagrophytes), this protein is Beta-lactamase-like protein ARB_00930.